A 96-amino-acid polypeptide reads, in one-letter code: Small ribosomal subunit protein bS18 (96 aa).

This sequence belongs to the bacterial ribosomal protein bS18 family. In terms of assembly, part of the 30S ribosomal subunit. Forms a tight heterodimer with protein bS6.

Binds as a heterodimer with protein bS6 to the central domain of the 16S rRNA, where it helps stabilize the platform of the 30S subunit. This chain is Small ribosomal subunit protein bS18, found in Gluconobacter oxydans (strain 621H) (Gluconobacter suboxydans).